Reading from the N-terminus, the 142-residue chain is Small ribosomal subunit protein uS11c (142 aa).

It belongs to the universal ribosomal protein uS11 family. Part of the 30S ribosomal subunit.

The protein localises to the plastid. The protein resides in the chloroplast. This Welwitschia mirabilis (Tree tumbo) protein is Small ribosomal subunit protein uS11c.